The following is a 140-amino-acid chain: Large ribosomal subunit protein uL11 (140 aa).

The protein belongs to the universal ribosomal protein uL11 family. As to quaternary structure, part of the ribosomal stalk of the 50S ribosomal subunit. Interacts with L10 and the large rRNA to form the base of the stalk. L10 forms an elongated spine to which L12 dimers bind in a sequential fashion forming a multimeric L10(L12)X complex. One or more lysine residues are methylated.

Forms part of the ribosomal stalk which helps the ribosome interact with GTP-bound translation factors. In Solidesulfovibrio magneticus (strain ATCC 700980 / DSM 13731 / RS-1) (Desulfovibrio magneticus), this protein is Large ribosomal subunit protein uL11.